The sequence spans 258 residues: MLEKIDGIIIKTKDYGETHKLVTIFSNKIGKFNALAKGAKKPKSRMAAVTQPFINARFFVYIGSGLSTIQQGEVLDSFRIIREDIFKTAYVSYMAELTDKLLDAKENDPFLYEQFYQTLLWINNQDEVDIPVIMYELKLYKKAGFAPVLHQCSRCGNQEGLSKFSIREGGMLCQQCAYFDPEAIHISEKLSRLLYLFSEVDLKRIGNIRMKKENVQLIRKILYEYYDQYGGFWIKSRKVLDQLDFFIPNVKNGNSYNE.

Belongs to the RecO family.

In terms of biological role, involved in DNA repair and RecF pathway recombination. This is DNA repair protein RecO from Oceanobacillus iheyensis (strain DSM 14371 / CIP 107618 / JCM 11309 / KCTC 3954 / HTE831).